Consider the following 397-residue polypeptide: Argininosuccinate synthase (397 aa).

8–16 lines the ATP pocket; sequence AYSGGLDTS. The L-citrulline site is built by Tyr-86 and Ser-91. ATP is bound at residue Gly-116. Thr-118, Asn-122, and Asp-123 together coordinate L-aspartate. Asn-122 provides a ligand contact to L-citrulline. 5 residues coordinate L-citrulline: Arg-126, Ser-175, Ser-184, Glu-260, and Tyr-272.

The protein belongs to the argininosuccinate synthase family. Type 1 subfamily. Homotetramer.

It localises to the cytoplasm. It carries out the reaction L-citrulline + L-aspartate + ATP = 2-(N(omega)-L-arginino)succinate + AMP + diphosphate + H(+). It functions in the pathway amino-acid biosynthesis; L-arginine biosynthesis; L-arginine from L-ornithine and carbamoyl phosphate: step 2/3. In Clostridium botulinum (strain Okra / Type B1), this protein is Argininosuccinate synthase.